The sequence spans 110 residues: Small ribosomal subunit protein bS18 (110 aa).

Positions Met-1 to Gly-18 are enriched in low complexity. A disordered region spans residues Met-1–Arg-41. The segment covering Pro-32 to Arg-41 has biased composition (basic residues).

Belongs to the bacterial ribosomal protein bS18 family. Part of the 30S ribosomal subunit. Forms a tight heterodimer with protein bS6.

Its function is as follows. Binds as a heterodimer with protein bS6 to the central domain of the 16S rRNA, where it helps stabilize the platform of the 30S subunit. The polypeptide is Small ribosomal subunit protein bS18 (Trichlorobacter lovleyi (strain ATCC BAA-1151 / DSM 17278 / SZ) (Geobacter lovleyi)).